The sequence spans 501 residues: Cytochrome P450 monooxygenase notH (501 aa).

The helical transmembrane segment at 11-31 (LGLESVGWVLGLLTTSILYLF) threads the bilayer. N298 carries an N-linked (GlcNAc...) asparagine glycan. C442 is a heme binding site.

Belongs to the cytochrome P450 family. Requires heme as cofactor.

The protein localises to the membrane. Its pathway is alkaloid biosynthesis. In terms of biological role, cytochrome P450 monooxygenase; part of the gene cluster that mediates the biosynthesis of notoamide, a fungal indole alkaloid that belongs to a family of natural products containing a characteristic bicyclo[2.2.2]diazaoctane core. The first step of notoamide biosynthesis involves coupling of L-proline and L-tryptophan by the bimodular NRPS notE, to produce cyclo-L-tryptophan-L-proline called brevianamide F. The reverse prenyltransferase notF then acts as a deoxybrevianamide E synthase and converts brevianamide F to deoxybrevianamide E via reverse prenylation at C-2 of the indole ring leading to the bicyclo[2.2.2]diazaoctane core. Deoxybrevianamide E is further hydroxylated at C-6 of the indole ring, likely catalyzed by the cytochrome P450 monooxygenase notG, to yield 6-hydroxy-deoxybrevianamide E. 6-hydroxy-deoxybrevianamide E is a specific substrate of the prenyltransferase notC for normal prenylation at C-7 to produce 6-hydroxy-7-prenyl-deoxybrevianamide, also called notoamide S. As the proposed pivotal branching point in notoamide biosynthesis, notoamide S can be diverted to notoamide E through an oxidative pyran ring closure putatively catalyzed by either notH cytochrome P450 monooxygenase or the notD FAD-linked oxidoreductase. This step would be followed by an indole 2,3-epoxidation-initiated pinacol-like rearrangement catalyzed by the notB FAD-dependent monooxygenase leading to the formation of notoamide C and notoamide D. On the other hand notoamide S is converted to notoamide T by notH (or notD), a bifunctional oxidase that also functions as the intramolecular Diels-Alderase responsible for generation of (+)-notoamide T. To generate antipodal (-)-notoaminide T, notH' (or notD') in Aspergillus versicolor is expected to catalyze a Diels-Alder reaction leading to the opposite stereochemistry. The remaining oxidoreductase notD (or notH) likely catalyzes the oxidative pyran ring formation to yield (+)-stephacidin A. The FAD-dependent monooxygenase notI is highly similar to notB and is predicted to catalyze a similar conversion from (+)-stephacidin A to (-)-notoamide B via the 2,3-epoxidation of (+)-stephacidin A followed by a pinacol-type rearrangement. Finally, it remains unclear which enzyme could be responsible for the final hydroxylation steps leading to notoamide A and sclerotiamide. This chain is Cytochrome P450 monooxygenase notH, found in Aspergillus sp. (strain MF297-2).